Here is a 177-residue protein sequence, read N- to C-terminus: R-phycoerythrin beta chain (177 aa).

Residues C50 and C61 each contribute to the phycourobilin site. An N4-methylasparagine modification is found at N72. (2R,3E)-phycoerythrobilin-binding residues include C82 and C158.

This sequence belongs to the phycobiliprotein family. Heterodimer of an alpha and a beta chain. Post-translationally, contains two covalently linked phycoerythrobilin chromophores and one covalently linked phycourobilin chromophore.

Its subcellular location is the plastid. It localises to the chloroplast thylakoid membrane. In terms of biological role, light-harvesting photosynthetic bile pigment-protein from the phycobiliprotein complex. The sequence is that of R-phycoerythrin beta chain (cpeB) from Lophosiphonia boldii (Red alga).